A 148-amino-acid chain; its full sequence is Putative nickel-responsive regulator (148 aa).

Ni(2+) is bound by residues H77, H88, H90, and C96.

Belongs to the transcriptional regulatory CopG/NikR family. Ni(2+) is required as a cofactor.

Transcriptional regulator. The protein is Putative nickel-responsive regulator of Bradyrhizobium diazoefficiens (strain JCM 10833 / BCRC 13528 / IAM 13628 / NBRC 14792 / USDA 110).